An 89-amino-acid polypeptide reads, in one-letter code: MSQQKGKKSRINVEIYGQQYSVVGDESTSHIRMVAAIVDDKMRELNAKNPSLDTSRLAVLTAVNVIHDYIKLKEEHEKLKESMTKKGME.

Belongs to the ZapA family. Type 2 subfamily. As to quaternary structure, homodimer. Interacts with FtsZ.

The protein localises to the cytoplasm. Functionally, activator of cell division through the inhibition of FtsZ GTPase activity, therefore promoting FtsZ assembly into bundles of protofilaments necessary for the formation of the division Z ring. It is recruited early at mid-cell but it is not essential for cell division. The polypeptide is Cell division protein ZapA (Bacillus thuringiensis (strain Al Hakam)).